A 425-amino-acid polypeptide reads, in one-letter code: Mothers against decapentaplegic homolog 3 (425 aa).

S2 carries the N-acetylserine modification. T8 is modified (phosphothreonine; by CDK2 and CDK4). Residues 10–136 form the MH1 domain; the sequence is PIVKRLLGWK…YQRVETPVLP (127 aa). K33 participates in a covalent cross-link: Glycyl lysine isopeptide (Lys-Gly) (interchain with G-Cter in ubiquitin). C64 serves as a coordination point for Zn(2+). A Glycyl lysine isopeptide (Lys-Gly) (interchain with G-Cter in ubiquitin) cross-link involves residue K81. Zn(2+)-binding residues include C109, C121, and H126. A linker region spans residues 137–231; sequence PVLVPRHTEI…QPVTYCEPAF (95 aa). Residues 165–177 show a composition bias toward polar residues; the sequence is NFPAGIEPQSNIP. Positions 165-208 are disordered; that stretch reads NFPAGIEPQSNIPETPPPGYLSEDGETSDHQMNHSMDAGSPNLS. At T179 the chain carries Phosphothreonine; by CDK2, CDK4 and MAPK. The residue at position 204 (S204) is a Phosphoserine; by GSK3 and MAPK. S208 is modified (phosphoserine; by MAPK). S213 is modified (phosphoserine; by CDK2 and CDK4). In terms of domain architecture, MH2 spans 232-425; the sequence is WCSISYYELN…SPSIRCSSVS (194 aa). The tract at residues 271-324 is sufficient for interaction with XPO4; that stretch reads LGLLSNVNRNAAVELTRRHIGRGVRLYYIGGEVFAECLSDSAIFVQSPNCNQRY. K378 carries the post-translational modification N6-acetyllysine. Phosphoserine is present on S416. S418 bears the Phosphoserine; by CK1 mark. Phosphoserine; by TGFBR1 occurs at positions 422, 423, and 425.

The protein belongs to the dwarfin/SMAD family. As to quaternary structure, monomer; in the absence of TGF-beta. Homooligomer; in the presence of TGF-beta. Heterotrimer; forms a heterotrimer in the presence of TGF-beta consisting of two molecules of C-terminally phosphorylated SMAD2 or SMAD3 and one of SMAD4 to form the transcriptionally active SMAD2/SMAD3-SMAD4 complex. Part of a complex consisting of MAGI2/ARIP1, ACVR2A, ACVR1B and SMAD3. Forms a complex with SMAD2 and TRIM33 upon addition of TGF-beta. Found in a complex composed of SMAD3, RAN and XPO4; within the complex interacts directly with XPO4. Component of the multimeric complex SMAD3/SMAD4/JUN/FOS which forms at the AP1 promoter site; required for synergistic transcriptional activity in response to TGF-beta. Part of a ternary complex composed of SMAD3, ITCH/AIP4 and NEDD9/HEF1; within the complex NEDD9/HEF1 interacts (via N-terminus) with ITCH/AIP4; the complex mediates ubiquitination and proteasomal degradation of NEDD9/HEF1. Interacts with NEDD9; the interaction promotes NEDD9 ubiquitination and proteasomal degradation. Interacts (via an N-terminal domain) with JUN (via its basic DNA binding and leucine zipper domains); this interaction is essential for DNA binding and cooperative transcriptional activity in response to TGF-beta. Identified in a complex that contains at least ZNF451, SMAD2, SMAD3 and SMAD4. Interacts with PPM1A; the interaction dephosphorylates SMAD3 in the C-terminal SXS motif leading to disruption of the SMAD2/3-SMAD4 complex, nuclear export and termination of TGF-beta signaling. Interacts (via MH2 domain) with ZMIZ1 (via SP-RING-type domain); in the TGF-beta signaling pathway increases the activity of the SMAD3/SMAD4 transcriptional complex. Interacts (when phosphorylated) with RNF111; RNF111 acts as an enhancer of the transcriptional responses by mediating ubiquitination and degradation of SMAD3 inhibitors. Interacts (dephosphorylated form via the MH1 and MH2 domains) with RANBP3 (via its C-terminal R domain); the interaction results in the export of dephosphorylated SMAD3 out of the nucleus and termination of the TGF-beta signaling. Interacts (via MH2 domain) with LEMD3; the interaction represses SMAD3 transcriptional activity through preventing the formation of the heteromeric complex with SMAD4 and translocation to the nucleus. Interacts (via the linker region) with EP300 (C-terminal); the interaction promotes SMAD3 acetylation and is enhanced by TGF-beta phosphorylation in the C-terminal of SMAD3. This interaction can be blocked by competitive binding of adenovirus oncoprotein E1A to the same C-terminal site on EP300, which then results in partially inhibited SMAD3/SMAD4 transcriptional activity. Interacts with TGFBR1. Interacts with TGFB1I1. Interacts with PRDM16. Interacts with SNW1. Interacts (via MH2 domain) with ZFYVE9. Interacts with HDAC1. Interacts with TGIF2. Interacts with SKOR1. Interacts with SKOR2. Interacts with DACH1; the interaction inhibits the TGF-beta signaling. Interacts with RBPMS. Interacts (via MH2 domain) with MECOM. Interacts with WWTR1 (via its coiled-coil domain). Interacts with SKI; the interaction represses SMAD3 transcriptional activity. Interacts with MEN1. Interacts with IL1F7. Interaction with CSNK1G2. Interacts with PDPK1 (via PH domain). Interacts with DAB2; the interactions are enhanced upon TGF-beta stimulation. Interacts with USP15. Interacts with PPP5C; the interaction decreases SMAD3 phosphorylation and protein levels. Interacts with LDLRAD4 (via the SMAD interaction motif). Interacts with PMEPA1. Interacts with ZNF451. Interacts with ZFHX3. Interacts weakly with ZNF8. Interacts with STUB1, HSPA1A, HSPA1B, HSP90AA1 and HSP90AB1. Interacts with YAP1 (when phosphorylated at 'Ser-55'). Interacts with MAGI2/ARIP1. Interacts (via MH2 domain) with CITED2 (via C-terminus). Interacts with HGS. Interacts with WWP1. Interacts with TTRAP. Interacts with FOXL2. Interacts with PML. Interacts with NEDD4L; the interaction requires TGF-beta stimulation. Interacts with ZC3H3. Interacts with TGIF. Interacts with CREBBP. Interacts with ATF2. Interacts with NEDD9; the interaction is inhibited by oxidation of NEDD9. Interacts with MTMR4; negatively regulates TGF-beta signaling through SMAD3 dephosphorylation and retention in endosomes. Phosphorylated on serine and threonine residues. Enhanced phosphorylation in the linker region on Thr-179, Ser-204 and Ser-208 on EGF and TGF-beta treatment. Ser-208 is the main site of MAPK-mediated phosphorylation. CDK-mediated phosphorylation occurs in a cell-cycle dependent manner and inhibits both the transcriptional activity and antiproliferative functions of SMAD3. This phosphorylation is inhibited by flavopiridol. Maximum phosphorylation at the G(1)/S junction. Also phosphorylated on serine residues in the C-terminal SXS motif by TGFBR1 and ACVR1. TGFBR1-mediated phosphorylation at these C-terminal sites is required for interaction with SMAD4, nuclear location and transactivational activity, and appears to be a prerequisite for the TGF-beta mediated phosphorylation in the linker region. Dephosphorylated in the C-terminal SXS motif by PPM1A. This dephosphorylation disrupts the interaction with SMAD4, promotes nuclear export and terminates TGF-beta-mediated signaling. Phosphorylation at Ser-418 by CSNK1G2/CK1 promotes ligand-dependent ubiquitination and subsequent proteasome degradation, thus inhibiting SMAD3-mediated TGF-beta responses. Phosphorylated by PDPK1. In terms of processing, acetylation in the nucleus by EP300 in the MH2 domain regulates positively its transcriptional activity and is enhanced by TGF-beta. Post-translationally, poly-ADP-ribosylated by PARP1 and PARP2. ADP-ribosylation negatively regulates SMAD3 transcriptional responses during the course of TGF-beta signaling. Ubiquitinated. Monoubiquitinated, leading to prevent DNA-binding. Deubiquitination by USP15 alleviates inhibition and promotes activation of TGF-beta target genes. Ubiquitinated by RNF111, leading to its degradation: only SMAD3 proteins that are 'in use' are targeted by RNF111, RNF111 playing a key role in activating SMAD3 and regulating its turnover. Undergoes STUB1-mediated ubiquitination and degradation. Highly expressed in the brain and ovary. Detected in the pyramidal cells of the hippocampus, granule cells of the dentate gyrus, granular cells of the cerebral cortex and the granulosa cells of the ovary.

The protein localises to the cytoplasm. It localises to the nucleus. Functionally, receptor-regulated SMAD (R-SMAD) that is an intracellular signal transducer and transcriptional modulator activated by TGF-beta (transforming growth factor) and activin type 1 receptor kinases. Binds the TRE element in the promoter region of many genes that are regulated by TGF-beta and, on formation of the SMAD3/SMAD4 complex, activates transcription. Also can form a SMAD3/SMAD4/JUN/FOS complex at the AP-1/SMAD site to regulate TGF-beta-mediated transcription. Has an inhibitory effect on wound healing probably by modulating both growth and migration of primary keratinocytes and by altering the TGF-mediated chemotaxis of monocytes. This effect on wound healing appears to be hormone-sensitive. Regulator of chondrogenesis and osteogenesis and inhibits early healing of bone fractures. Positively regulates PDPK1 kinase activity by stimulating its dissociation from the 14-3-3 protein YWHAQ which acts as a negative regulator. The protein is Mothers against decapentaplegic homolog 3 (SMAD3) of Sus scrofa (Pig).